A 180-amino-acid polypeptide reads, in one-letter code: Ribosome rescue factor SmrB (180 aa).

Positions 98-173 (LDLHGLTQLI…GDAALLLLVE (76 aa)) constitute a Smr domain.

This sequence belongs to the SmrB family. In terms of assembly, associates with collided ribosomes, but not with correctly translating polysomes.

In terms of biological role, acts as a ribosome collision sensor. Detects stalled/collided disomes (pairs of ribosomes where the leading ribosome is stalled and a second ribosome has collided with it) and endonucleolytically cleaves mRNA at the 5' boundary of the stalled ribosome. Stalled/collided disomes form a new interface (primarily via the 30S subunits) that binds SmrB. Cleaved mRNA becomes available for tmRNA ligation, leading to ribosomal subunit dissociation and rescue of stalled ribosomes. This Proteus mirabilis (strain HI4320) protein is Ribosome rescue factor SmrB.